Consider the following 873-residue polypeptide: Alanine--tRNA ligase (873 aa).

Residues His557, His561, Cys659, and His663 each coordinate Zn(2+).

The protein belongs to the class-II aminoacyl-tRNA synthetase family. Requires Zn(2+) as cofactor.

The protein resides in the cytoplasm. The catalysed reaction is tRNA(Ala) + L-alanine + ATP = L-alanyl-tRNA(Ala) + AMP + diphosphate. Catalyzes the attachment of alanine to tRNA(Ala) in a two-step reaction: alanine is first activated by ATP to form Ala-AMP and then transferred to the acceptor end of tRNA(Ala). Also edits incorrectly charged Ser-tRNA(Ala) and Gly-tRNA(Ala) via its editing domain. The sequence is that of Alanine--tRNA ligase from Nitrosococcus oceani (strain ATCC 19707 / BCRC 17464 / JCM 30415 / NCIMB 11848 / C-107).